The primary structure comprises 364 residues: Carbamoyl phosphate synthase small chain (364 aa).

CPSase stretches follow at residues 1–167 (MKRQ…PSPG) and 1–171 (MKRQ…RGER). Ser-45, Gly-219, and Gly-221 together coordinate L-glutamine. Positions 171-358 (RIVLIDFGMK…LALIREFNKK (188 aa)) constitute a Glutamine amidotransferase type-1 domain. The active-site Nucleophile is the Cys-246. Residues Leu-247, Gln-250, Asn-288, Gly-290, and Tyr-291 each contribute to the L-glutamine site. Active-site residues include His-331 and Glu-333.

It belongs to the CarA family. Composed of two chains; the small (or glutamine) chain promotes the hydrolysis of glutamine to ammonia, which is used by the large (or ammonia) chain to synthesize carbamoyl phosphate. Tetramer of heterodimers (alpha,beta)4.

The catalysed reaction is hydrogencarbonate + L-glutamine + 2 ATP + H2O = carbamoyl phosphate + L-glutamate + 2 ADP + phosphate + 2 H(+). It carries out the reaction L-glutamine + H2O = L-glutamate + NH4(+). It participates in amino-acid biosynthesis; L-arginine biosynthesis; carbamoyl phosphate from bicarbonate: step 1/1. Its pathway is pyrimidine metabolism; UMP biosynthesis via de novo pathway; (S)-dihydroorotate from bicarbonate: step 1/3. Small subunit of the glutamine-dependent carbamoyl phosphate synthetase (CPSase). CPSase catalyzes the formation of carbamoyl phosphate from the ammonia moiety of glutamine, carbonate, and phosphate donated by ATP, constituting the first step of 2 biosynthetic pathways, one leading to arginine and/or urea and the other to pyrimidine nucleotides. The small subunit (glutamine amidotransferase) binds and cleaves glutamine to supply the large subunit with the substrate ammonia. The sequence is that of Carbamoyl phosphate synthase small chain from Bacillus caldolyticus.